Consider the following 502-residue polypeptide: MFTLPQKEFRMTTACPGSDSIQDLPSNKGDGLERECSRKPDQKLLKFYGVGDPAAELSSSSPYLSSRGSVIKWFWDSAEEGYRTYHMDEYDEDKNPSGIINLGTSENKLCFDLLSRRLSQSDMLQVEPALLQYPDWRGHLFLREEVARFLSFYCRSPAPLKPENVVVLNGCASLFSALATVLCEAGEAFLIPAPYYGAITQHVYLYGNVRLVCVYLDSEVTGLETRPFQLTVEKLEMALQGANSEGVKVKGLILINPQNPLGDIYSPGELQEYLEFAKRHELHVMVDEVYMLSVFEESAGYRSVLSLERLPDPQRTHVMWATSKDFGMSGLRFGTLYTENWAVATAVASLCRYHGLSGLVQYQMAQLLRDHDWINQVYLPENHARLKAAHTYVSEDLRALGIPFVSRGAGFFIWVDLRKYLPEATFEEEVLLWRRFLENKVLLSFGKAFECKEPGWFRLVFSDKTHRLHLGMQRVRQVLEGQPQLADGAPPHQIQEPQGPHR.

The segment at 15–35 (CPGSDSIQDLPSNKGDGLERE) is disordered. Glu106 is a substrate binding site. Lys324 carries the post-translational modification N6-(pyridoxal phosphate)lysine.

This sequence belongs to the class-I pyridoxal-phosphate-dependent aminotransferase family.

In terms of biological role, does not catalyze the synthesis of 1-aminocyclopropane-1-carboxylate but is capable of catalyzing the deamination of L-vinylglycine. In Bos taurus (Bovine), this protein is 1-aminocyclopropane-1-carboxylate synthase-like protein 1 (ACCS).